The chain runs to 280 residues: Pantothenate synthetase (280 aa).

30–37 (MGYLHEGH) is a binding site for ATP. Catalysis depends on His-37, which acts as the Proton donor. Gln-61 contacts (R)-pantoate. Gln-61 lines the beta-alanine pocket. Residue 147–150 (GKKD) participates in ATP binding. Gln-153 serves as a coordination point for (R)-pantoate. Residues Val-176 and 184–187 (MSSR) contribute to the ATP site.

This sequence belongs to the pantothenate synthetase family. In terms of assembly, homodimer.

The protein resides in the cytoplasm. The catalysed reaction is (R)-pantoate + beta-alanine + ATP = (R)-pantothenate + AMP + diphosphate + H(+). Its pathway is cofactor biosynthesis; (R)-pantothenate biosynthesis; (R)-pantothenate from (R)-pantoate and beta-alanine: step 1/1. Catalyzes the condensation of pantoate with beta-alanine in an ATP-dependent reaction via a pantoyl-adenylate intermediate. The polypeptide is Pantothenate synthetase (Sulfurihydrogenibium sp. (strain YO3AOP1)).